The primary structure comprises 61 residues: Large ribosomal subunit protein uL30 (61 aa).

It belongs to the universal ribosomal protein uL30 family. As to quaternary structure, part of the 50S ribosomal subunit.

The protein is Large ribosomal subunit protein uL30 of Oenococcus oeni (strain ATCC BAA-331 / PSU-1).